A 570-amino-acid polypeptide reads, in one-letter code: Coiled-coil domain-containing protein 22 homolog (570 aa).

Disordered regions lie at residues Arg-110–Leu-129 and Leu-234–Leu-280. The segment covering Thr-248–Ala-257 has biased composition (polar residues). Residues Ser-265–Thr-276 are compositionally biased toward low complexity. Coiled coils occupy residues Glu-308–Gln-471 and Gly-529–Gly-570.

The protein belongs to the CCDC22 family.

The chain is Coiled-coil domain-containing protein 22 homolog from Drosophila willistoni (Fruit fly).